A 115-amino-acid chain; its full sequence is Probable K(+)/H(+) antiporter subunit C (115 aa).

Transmembrane regions (helical) follow at residues 4–21 (ILSA…YLLL), 28–47 (VIIG…FGMG), and 75–97 (ALVL…VLLA).

Belongs to the CPA3 antiporters (TC 2.A.63) subunit C family. May form a hetero-oligomeric complex that consists of six subunits: PhaAB, PhaC, PhaD, PhaE, PhaF and PhaG.

Its subcellular location is the cell membrane. In terms of biological role, part of a K(+) efflux system which is required for the adaptation of R.meliloti to alkaline pH as well as for the infection process during symbiotic nodule development. The sequence is that of Probable K(+)/H(+) antiporter subunit C (phaC) from Rhizobium meliloti (strain 1021) (Ensifer meliloti).